A 447-amino-acid polypeptide reads, in one-letter code: MIKITKGLDLPIAGMPLQQISPAPAVKRVALLGEEYVGMRPAMAVKEGDRVKKGQILFEDKKTPGVYFTAPASGVVSAIHRGERRVLQSVVIDIEGNEAVAFTRYAADALAELPRDTVQQQLLASGLWTALRTRPFSKTPRPGSVPAAIFVNAMDTNPLAAEPQPIILAERAAFDAGLTVLTRLTDGKVHVCQPSGGKLGGHPAGQVCFNQFSGPHPAGLPGTHIHFLEPVSLNKQVWHLNYQDAIAIGQLFLEGELNCERVIALGGPQVKSPRLVKTTLGASLDDLLAGELEEGENRVISGSVLSGTRAHGPHAFLGRFHLQVSVVREGREKELFGWVMPGKEKFSITRTTLGHFFKRKRFHFSTDTHGGERAMVPIGNYERVMPLDILPTILLRDLLAGDSDSAQALGCLELDEEDLALCTYVCPGKYEYGPALRSVLTQIEQEG.

This sequence belongs to the NqrA family. In terms of assembly, composed of six subunits; NqrA, NqrB, NqrC, NqrD, NqrE and NqrF.

The catalysed reaction is a ubiquinone + n Na(+)(in) + NADH + H(+) = a ubiquinol + n Na(+)(out) + NAD(+). NQR complex catalyzes the reduction of ubiquinone-1 to ubiquinol by two successive reactions, coupled with the transport of Na(+) ions from the cytoplasm to the periplasm. NqrA to NqrE are probably involved in the second step, the conversion of ubisemiquinone to ubiquinol. The sequence is that of Na(+)-translocating NADH-quinone reductase subunit A from Klebsiella pneumoniae (strain 342).